The primary structure comprises 566 residues: Oxygen-dependent choline dehydrogenase (566 aa).

7–36 is a binding site for FAD; it reads DYIICGAGSAGNVLATRLTEDPNVTVLLLE. A disordered region spans residues 180-203; that stretch reads NGYQQEGFGPMDRTVTPKGRRAST. Histidine 474 serves as the catalytic Proton acceptor.

This sequence belongs to the GMC oxidoreductase family. The cofactor is FAD.

The catalysed reaction is choline + A = betaine aldehyde + AH2. The enzyme catalyses betaine aldehyde + NAD(+) + H2O = glycine betaine + NADH + 2 H(+). The protein operates within amine and polyamine biosynthesis; betaine biosynthesis via choline pathway; betaine aldehyde from choline (cytochrome c reductase route): step 1/1. Functionally, involved in the biosynthesis of the osmoprotectant glycine betaine. Catalyzes the oxidation of choline to betaine aldehyde and betaine aldehyde to glycine betaine at the same rate. This chain is Oxygen-dependent choline dehydrogenase, found in Burkholderia ambifaria (strain MC40-6).